We begin with the raw amino-acid sequence, 370 residues long: A-type ATP synthase subunit C (370 aa).

Belongs to the V-ATPase V0D/AC39 subunit family. As to quaternary structure, has multiple subunits with at least A(3), B(3), C, D, E, F, H, I and proteolipid K(x).

The protein localises to the cell membrane. In terms of biological role, component of the A-type ATP synthase that produces ATP from ADP in the presence of a proton gradient across the membrane. In Pyrococcus abyssi (strain GE5 / Orsay), this protein is A-type ATP synthase subunit C.